We begin with the raw amino-acid sequence, 600 residues long: Na(+)/dicarboxylate cotransporter 3 (600 aa).

Topologically, residues methionine 1–arginine 16 are cytoplasmic. A helical transmembrane segment spans residues leucine 17–lysine 37. At glutamate 38–glutamate 55 the chain is on the extracellular side. The helical transmembrane segment at alanine 56–leucine 76 threads the bilayer. The Cytoplasmic segment spans residues proline 77–cysteine 82. Residues proline 83 to isoleucine 103 form a helical membrane-spanning segment. At glutamate 104–phenylalanine 137 the chain is on the extracellular side. The helical transmembrane segment at leucine 138–isoleucine 158 threads the bilayer. The Cytoplasmic segment spans residues leucine 159–tryptophan 229. A helical membrane pass occupies residues lysine 230–glycine 250. The Extracellular segment spans residues threonine 251–isoleucine 278. The helical transmembrane segment at phenylalanine 279–tyrosine 299 threads the bilayer. Over glycine 300 to isoleucine 336 the chain is Cytoplasmic. The helical transmembrane segment at lysine 337–arginine 357 threads the bilayer. Residues aspartate 358 to glycine 372 lie on the Extracellular side of the membrane. The helical transmembrane segment at phenylalanine 373 to glutamine 393 threads the bilayer. The Cytoplasmic portion of the chain corresponds to lysine 394–threonine 422. The helical intramembrane region spans valine 423–glutamate 443. Residues serine 444 to proline 461 are Cytoplasmic-facing. Residues proline 462–asparagine 482 traverse the membrane as a helical segment. Topologically, residues threonine 483 to leucine 505 are extracellular. A helical membrane pass occupies residues tyrosine 506–proline 526. Topologically, residues proline 527–glycine 546 are cytoplasmic. A helical transmembrane segment spans residues leucine 547–alanine 567. The Extracellular portion of the chain corresponds to isoleucine 568–leucine 600. Asparagine 584 and asparagine 594 each carry an N-linked (GlcNAc...) asparagine glycan.

Belongs to the SLC13A/DASS transporter (TC 2.A.47) family. NADC subfamily. In terms of tissue distribution, highly expressed in proximal parts of straight tubules in the kidney. Detected in placenta, in brain, and in liver. Strongly expressed within the meningeal layers of supporting tissue that surround the brain and relatively weakly expressed throughout the cerebral cortex, hippocampus, and cerebellum.

The protein localises to the cell membrane. The catalysed reaction is succinate(out) + 3 Na(+)(out) = succinate(in) + 3 Na(+)(in). The enzyme catalyses 2-oxoglutarate(out) + 3 Na(+)(out) = 2-oxoglutarate(in) + 3 Na(+)(in). It carries out the reaction N-acetyl-L-aspartate(out) + 3 Na(+)(out) = N-acetyl-L-aspartate(in) + 3 Na(+)(in). It catalyses the reaction glutarate(out) + 3 Na(+)(out) = glutarate(in) + 3 Na(+)(in). The catalysed reaction is fumarate(out) + 3 Na(+)(out) = fumarate(in) + 3 Na(+)(in). The enzyme catalyses malate(out) + 3 Na(+)(out) = malate(in) + 3 Na(+)(in). It carries out the reaction 2,2-dimethylsuccinate(out) + 3 Na(+)(out) = 2,2-dimethylsuccinate(in) + 3 Na(+)(in). It catalyses the reaction 2,3-dimethylsuccinate(out) + 3 Na(+)(out) = 2,3-dimethylsuccinate(in) + 3 Na(+)(in). The catalysed reaction is itaconate(out) + 3 Na(+)(out) = itaconate(in) + 3 Na(+)(in). Its activity is regulated as follows. Li(+) decreases succinate transport in the presence of Na(+). Its function is as follows. High-affinity sodium-dicarboxylate cotransporter that accepts a range of substrates with 4-6 carbon atoms, such as the citric acid cycle intermediates succinate and alpha-ketoglutarate (2-oxoglutarate), as well as other compounds including N-acetyl-L-aspartate. Transports the dicarboxylate into the cell with a probable stoichiometry of 3 Na(+) for 1 divalent dicarboxylate, rendering the process electrogenic. Can transport citrate in a Na(+)-dependent manner, recognizing the divalent form of citrate rather than the trivalent form which is normally found in blood. Imports itaconate in hepatocytes leading to activation of TFEB-dependent lysosomal biogenesis involved in antibacterial innate immune response. In Rattus norvegicus (Rat), this protein is Na(+)/dicarboxylate cotransporter 3 (Slc13a3).